The following is a 167-amino-acid chain: Endoribonuclease YbeY (167 aa).

The Zn(2+) site is built by histidine 125, histidine 129, and histidine 135.

It belongs to the endoribonuclease YbeY family. The cofactor is Zn(2+).

Its subcellular location is the cytoplasm. Its function is as follows. Single strand-specific metallo-endoribonuclease involved in late-stage 70S ribosome quality control and in maturation of the 3' terminus of the 16S rRNA. The protein is Endoribonuclease YbeY of Allorhizobium ampelinum (strain ATCC BAA-846 / DSM 112012 / S4) (Agrobacterium vitis (strain S4)).